Consider the following 359-residue polypeptide: Stearoyl-CoA desaturase (359 aa).

The Cytoplasmic segment spans residues 1–72 (MPAHLLQEEI…EGPRPKLEYV (72 aa)). The helical transmembrane segment at 73-93 (WRNIILMSLLHLGALYGIILI) threads the bilayer. Asn-75 serves as a coordination point for substrate. At 94-97 (PTCK) the chain is on the lumenal side. Residues 98-118 (IYTLLWAFAYYLLSAVGVTAG) traverse the membrane as a helical segment. Residues 119 to 217 (AHRLWSHRTY…EKLVMFQRRY (99 aa)) lie on the Cytoplasmic side of the membrane. Residues His-120 and His-125 each coordinate Fe cation. The Histidine box-1 motif lies at 120 to 125 (HRLWSH). Substrate contacts are provided by Asn-148, Arg-155, and Asp-156. Residues His-157, His-160, and His-161 each coordinate Fe cation. The short motif at 157–161 (HRAHH) is the Histidine box-2 element. Positions 188 and 189 each coordinate substrate. At Ser-203 the chain carries Phosphoserine. Residues 218–237 (YKPGILLMCFILPTIVPWYC) traverse the membrane as a helical segment. The Lumenal portion of the chain corresponds to 238-241 (WGEA). A helical membrane pass occupies residues 242–263 (FPQSLFVATFLRYAIVLNATWL). Residue Trp-262 participates in substrate binding. The Cytoplasmic portion of the chain corresponds to 264 to 359 (VNSAAHLYGY…RTGDESYKSG (96 aa)). Residues His-269, His-298, His-301, and His-302 each contribute to the Fe cation site. The short motif at 298 to 302 (HNYHH) is the Histidine box-3 element.

This sequence belongs to the fatty acid desaturase type 1 family. The cofactor is Fe(2+).

It localises to the endoplasmic reticulum membrane. It catalyses the reaction octadecanoyl-CoA + 2 Fe(II)-[cytochrome b5] + O2 + 2 H(+) = (9Z)-octadecenoyl-CoA + 2 Fe(III)-[cytochrome b5] + 2 H2O. The enzyme catalyses hexadecanoyl-CoA + 2 Fe(II)-[cytochrome b5] + O2 + 2 H(+) = (9Z)-hexadecenoyl-CoA + 2 Fe(III)-[cytochrome b5] + 2 H2O. Stearoyl-CoA desaturase that utilizes O(2) and electrons from reduced cytochrome b5 to introduce the first double bond into saturated fatty acyl-CoA substrates. Catalyzes the insertion of a cis double bond at the delta-9 position into fatty acyl-CoA substrates including palmitoyl-CoA and stearoyl-CoA. Gives rise to a mixture of 16:1 and 18:1 unsaturated fatty acids. Plays an important role in lipid biosynthesis. Plays an important role in regulating the expression of genes that are involved in lipogenesis and in regulating mitochondrial fatty acid oxidation. Plays an important role in body energy homeostasis. Contributes to the biosynthesis of membrane phospholipids, cholesterol esters and triglycerides. In Sus scrofa (Pig), this protein is Stearoyl-CoA desaturase (SCD).